A 284-amino-acid chain; its full sequence is UPF0761 membrane protein IL2447 (284 aa).

A run of 6 helical transmembrane segments spans residues 41 to 61 (MLSLVPLLVVMFTVFSAFPMF), 98 to 118 (MTAIGVGFLFIVAIMLMSAID), 137 to 157 (FAVYWMLLTLGPVLIGSGLAA), 178 to 198 (FVLWFVPIVTSFVFFVLMYQL), 214 to 234 (VIAALLFELSKQLFSLYITFF), and 247 to 267 (IPILIVWIYLSWLIVLIGAVL).

This sequence belongs to the UPF0761 family.

It is found in the cell inner membrane. The chain is UPF0761 membrane protein IL2447 from Idiomarina loihiensis (strain ATCC BAA-735 / DSM 15497 / L2-TR).